A 791-amino-acid polypeptide reads, in one-letter code: Ubiquitin carboxyl-terminal hydrolase 10-A (791 aa).

Polar residues-rich tracts occupy residues 118 to 139 (FSES…SGTG) and 270 to 284 (DTTE…QTLE). Disordered stretches follow at residues 118–156 (FSES…YYSY) and 270–291 (DTTE…EDTA). The USP domain occupies 408–788 (RGLINKGNWC…TAYLLYYRRV (381 aa)). C417 functions as the Nucleophile in the catalytic mechanism. Residues 560–580 (EVNKEEQEGSDEEWEQVGPRN) are disordered. H742 (proton acceptor) is an active-site residue.

The protein belongs to the peptidase C19 family. USP10 subfamily.

It localises to the cytoplasm. It is found in the nucleus. It carries out the reaction Thiol-dependent hydrolysis of ester, thioester, amide, peptide and isopeptide bonds formed by the C-terminal Gly of ubiquitin (a 76-residue protein attached to proteins as an intracellular targeting signal).. Its function is as follows. Hydrolase that can remove conjugated ubiquitin from target proteins such as p53/tp53, rps2/us5, rps3/us3, rps10/eS10, becn1, snx3 and cftr. Acts as an essential regulator of p53/tp53 stability: in unstressed cells, specifically deubiquitinates p53/tp53 in the cytoplasm, leading to counteracts MDM2 action and stabilize p53/tp53. Following DNA damage, translocates to the nucleus and deubiquitinates p53/tp53, leading to regulate the p53/TP53-dependent DNA damage response. Component of a regulatory loop that controls autophagy and p53/tp53 levels. Plays a key role in 40S ribosome subunit recycling when a ribosome has stalled during translation: acts both by inhibiting formation of stress granules, which store stalled translation pre-initiation complexes, and mediating deubiquitination of 40S ribosome subunits. Deubiquitinates cftr in early endosomes, enhancing its endocytic recycling. The sequence is that of Ubiquitin carboxyl-terminal hydrolase 10-A (usp10-a) from Xenopus laevis (African clawed frog).